Here is a 328-residue protein sequence, read N- to C-terminus: Cytochrome f (328 aa).

A signal peptide spans 1–44 (MRTPDFSAIWQASKQLTARIILLAFATFALYVFHDLAFPQGAAA). 4 residues coordinate heme: Y45, C66, C69, and H70. Residues 294–314 (IKGLMVFLAGIMLAQILLVIK) form a helical membrane-spanning segment.

The protein belongs to the cytochrome f family. As to quaternary structure, the 4 large subunits of the cytochrome b6-f complex are cytochrome b6, subunit IV (17 kDa polypeptide, PetD), cytochrome f and the Rieske protein, while the 4 small subunits are PetG, PetL, PetM and PetN. The complex functions as a dimer. The cofactor is heme.

The protein localises to the cellular thylakoid membrane. Its function is as follows. Component of the cytochrome b6-f complex, which mediates electron transfer between photosystem II (PSII) and photosystem I (PSI), cyclic electron flow around PSI, and state transitions. The sequence is that of Cytochrome f from Rippkaea orientalis (strain PCC 8801 / RF-1) (Cyanothece sp. (strain PCC 8801)).